A 118-amino-acid chain; its full sequence is Small ribosomal subunit protein uS13 (118 aa).

The segment at 93–118 (RGLPVRGQRTKTNARTRKGPRKPIRK) is disordered.

It belongs to the universal ribosomal protein uS13 family. In terms of assembly, part of the 30S ribosomal subunit. Forms a loose heterodimer with protein S19. Forms two bridges to the 50S subunit in the 70S ribosome.

Located at the top of the head of the 30S subunit, it contacts several helices of the 16S rRNA. In the 70S ribosome it contacts the 23S rRNA (bridge B1a) and protein L5 of the 50S subunit (bridge B1b), connecting the 2 subunits; these bridges are implicated in subunit movement. Contacts the tRNAs in the A and P-sites. This chain is Small ribosomal subunit protein uS13, found in Azotobacter vinelandii (strain DJ / ATCC BAA-1303).